Consider the following 541-residue polypeptide: Calcium/calmodulin-dependent protein kinase kinase (541 aa).

The interval 83-106 (AVQEDDEAGPHSSNNLAATMSPNL) is disordered. Positions 93–106 (HSSNNLAATMSPNL) are enriched in polar residues. The Protein kinase domain occupies 130-411 (YRLMEEIGQG…LHEVKVHTWV (282 aa)). ATP is bound by residues 136–144 (IGQGSYGIV) and Lys-159. Positions 169–190 (NFACFRQPPPRRNKENAAPSVL) are RP domain. The Proton acceptor role is filled by Asp-276. Positions 437-442 (ENCVRV) are autoinhibitory domain. A calmodulin-binding region spans residues 440-465 (VRVIPRLDTLILVKAMGHRKRFGNPF). Positions 462 to 512 (GNPFRNKLSAQSSIRDRRKSSSVKDPTYVPPPNSPPATSNNNLNSTKVDRP) are disordered. Over residues 497-507 (PATSNNNLNST) the composition is skewed to low complexity.

This sequence belongs to the protein kinase superfamily. Ser/Thr protein kinase family. It depends on Mg(2+) as a cofactor. As to expression, expressed in head and tail neurons and vulval muscles.

It localises to the cytoplasm. It catalyses the reaction L-seryl-[protein] + ATP = O-phospho-L-seryl-[protein] + ADP + H(+). The enzyme catalyses L-threonyl-[protein] + ATP = O-phospho-L-threonyl-[protein] + ADP + H(+). Activated by Ca(2+)/calmodulin. Binding of calmodulin may relieve intrasteric autoinhibition. In terms of biological role, calcium/calmodulin-dependent protein kinase which phosphorylates cmk-1. Component of a calcium-triggered signaling cascade involved in CRE-mediated transcriptional activation, probably through cmk-1-mediated crh-1/CREB phosphorylation. Plays a role in salt-avoidance learning behavior via the phosphorylation of cmk-1. This chain is Calcium/calmodulin-dependent protein kinase kinase, found in Caenorhabditis elegans.